A 685-amino-acid chain; its full sequence is Bifunctional diguanylate cyclase/cyclic di-GMP phosphodiesterase MucR (685 aa).

The region spanning 6–199 (YNQVLVAFSL…YTGMAAAQFP (194 aa)) is the MHYT domain. The next 7 membrane-spanning stretches (helical) occupy residues 9–29 (VLVA…LDMA), 44–64 (LIGG…VGML), 77–97 (GLTL…LWLV), 117–137 (GIAA…GIVY), 141–161 (WLGL…WIAF), 175–195 (AGAA…GMAA), and 214–234 (GWLA…ALIV). The Cytoplasmic portion of the chain corresponds to 235-685 (SVLDSRLEAR…PAEQLLASVA (451 aa)). In terms of domain architecture, GGDEF spans 293 to 425 (RRFAVLFMDL…GRNGYCFFES (133 aa)). One can recognise an EAL domain in the interval 434–685 (QLQLLHDLRQ…PAEQLLASVA (252 aa)). Residues Gln-455, Glu-469, Leu-472, Arg-473, Asn-528, and Gln-533 each coordinate 3',3'-c-di-GMP. Glu-469 provides a ligand contact to Mg(2+). Mg(2+) is bound at residue Asn-528. Mg(2+) is bound by residues Glu-560, Asp-590, and Asp-591. Asp-590 serves as a coordination point for 3',3'-c-di-GMP. A 3',3'-c-di-GMP-binding site is contributed by Arg-614. Glu-647 contacts Mg(2+). 3',3'-c-di-GMP-binding residues include Glu-650 and Phe-669.

Homodimer. Requires Mg(2+) as cofactor.

The protein localises to the cell inner membrane. It carries out the reaction 2 GTP = 3',3'-c-di-GMP + 2 diphosphate. It catalyses the reaction 3',3'-c-di-GMP + H2O = 5'-phosphoguanylyl(3'-&gt;5')guanosine + H(+). In terms of biological role, displays both diguanylate cyclase (DGC) and c-di-GMP-specific phosphodiesterase (PDE) activity. Probably modulates DGC and PDE activities, and thus c-di-GMP levels, in a growth mode-dependent manner. May act as a PDE under planktonic growth conditions and as a DGC in biofilms. During biofilm formation, it specifically activates alginate biosynthesis via generation of a localized c-di-GMP pool in the vicinity of the alginate biosynthesis protein Alg44. This chain is Bifunctional diguanylate cyclase/cyclic di-GMP phosphodiesterase MucR, found in Pseudomonas aeruginosa (strain ATCC 15692 / DSM 22644 / CIP 104116 / JCM 14847 / LMG 12228 / 1C / PRS 101 / PAO1).